A 417-amino-acid chain; its full sequence is Serine hydroxymethyltransferase 3 (417 aa).

(6S)-5,6,7,8-tetrahydrofolate is bound by residues Leu121 and 125 to 127 (GHL). An N6-(pyridoxal phosphate)lysine modification is found at Lys230. Residue 355–357 (SPF) participates in (6S)-5,6,7,8-tetrahydrofolate binding.

This sequence belongs to the SHMT family. Homodimer. It depends on pyridoxal 5'-phosphate as a cofactor.

The protein resides in the cytoplasm. It carries out the reaction (6R)-5,10-methylene-5,6,7,8-tetrahydrofolate + glycine + H2O = (6S)-5,6,7,8-tetrahydrofolate + L-serine. It participates in one-carbon metabolism; tetrahydrofolate interconversion. It functions in the pathway amino-acid biosynthesis; glycine biosynthesis; glycine from L-serine: step 1/1. Functionally, catalyzes the reversible interconversion of serine and glycine with tetrahydrofolate (THF) serving as the one-carbon carrier. This reaction serves as the major source of one-carbon groups required for the biosynthesis of purines, thymidylate, methionine, and other important biomolecules. Also exhibits THF-independent aldolase activity toward beta-hydroxyamino acids, producing glycine and aldehydes, via a retro-aldol mechanism. The polypeptide is Serine hydroxymethyltransferase 3 (Pseudomonas fluorescens (strain Pf0-1)).